The sequence spans 64 residues: DNA-binding protein 7a (64 aa).

Belongs to the 7 kDa DNA-binding/endoribonuclease P2 family. As to quaternary structure, monomer.

Its subcellular location is the cytoplasm. Its function is as follows. Can constrain negative DNA supercoils. May be involved in maintaining the integrity of the genome at high temperature. This Saccharolobus islandicus (strain L.D.8.5 / Lassen #2) (Sulfolobus islandicus) protein is DNA-binding protein 7a.